A 726-amino-acid chain; its full sequence is MAR-binding filament-like protein 1 (726 aa).

The transit peptide at 1 to 41 (MGFLIGGSCFVPSVPLHSRFLSSPSSSSSSSPSSSQFGLLC) directs the protein to the chloroplast. The transit peptide at 42-95 (SSNVAKFKRRRPTLASLNQEDGYEYDVASAKRRAFLLVGISVLPFLQLRSPALA) directs the protein to the thylakoid. At 96–124 (DERGNEIKTSKVDLETEVAVVSEGTSPNP) the chain is on the lumenal, thylakoid side. The chain crosses the membrane as a helical span at residues 125–145 (FLALLNGLGIFSAGVLGALYA). Residues 144–691 (YALARQDTKA…KGEILRMRSQ (548 aa)) are a coiled coil. At 146–726 (LARQDTKAAE…VRRRKSSTSS (581 aa)) the chain is on the stromal side. The segment at 678–726 (LGSAKGEILRMRSQPDSVKAVNSTDNKEKSDNTVTVKKVVRRRKSSTSS) is disordered. Residues 691–701 (QPDSVKAVNST) are compositionally biased toward polar residues. The Nuclear localization signal motif lies at 715–722 (KVVRRRKS). Over residues 715–726 (KVVRRRKSSTSS) the composition is skewed to basic residues.

In terms of assembly, interacts with PTST2; the interaction is essential for the initiation of starch granules biosynthesis in leaf chloroplasts, for the correct location of the process in the stromal spaces between the thylakoid membranes, and for the association of PTST2 with the thylakoid membranes. Predicted to be translocated into the thylakoid by the Tat system. The position of the transit peptide cleavages have not been experimentally proven.

It localises to the plastid. The protein localises to the chloroplast. The protein resides in the chloroplast thylakoid membrane. Its subcellular location is the chloroplast stroma. It is found in the chloroplast nucleoid. It localises to the nucleus. The protein localises to the nucleus matrix. In terms of biological role, DNA-binding protein required for the initiation of starch granules biosynthesis in leaf chloroplasts. Anchored to the thylakoid membranes with its C-terminus facing into the stroma where it is essential for localizing PTST2 and SS4 to the stromal spaces between the thylakoid membranes in order to begin starch granule formation. Associated with leaf chloroplastic nucleoids in vivo. Binds to various chloroplastic double-stranded DNA fragments without particular sequence specificity in vitro. May function at the interface between nucleoids and thylakoids possibly by anchoring nucleoids to the thylakoid membrane system in mature chloroplasts. Likely to participate in nuclear architecture by connecting chromatin with the nuclear matrix and potentially with the nuclear envelope. The chain is MAR-binding filament-like protein 1 from Arabidopsis thaliana (Mouse-ear cress).